The sequence spans 740 residues: DNA (cytosine-5)-methyltransferase 3C (740 aa).

Disordered stretches follow at residues 75–99 (LTGD…PVMP) and 248–312 (FKPT…DVTN). The ADD domain maps to 309-441 (DVTNNKGNLE…LQDFFTTDPD (133 aa)). Residues 320 to 350 (HCLSCGRKDPVSFHPLFEGGLCQSCRDRFLE) form a GATA-type; atypical zinc finger. The segment at 361-417 (QSYCTVCCEGRELLLCSNTSCCRCFCVECLEVLVGAGTAEDVKLQEPWSCYMCLPQR) adopts a PHD-type; atypical zinc-finger fold. Residues 462-740 (IRVLSLFDGI…APLKDHFACE (279 aa)) enclose the SAM-dependent MTase C5-type domain. S-adenosyl-L-methionine-binding residues include Ile-471, Thr-473, Glu-492, Asp-514, and Ile-515. The active site involves Cys-538. Residues Arg-719 and Trp-721 each coordinate S-adenosyl-L-methionine.

Belongs to the class I-like SAM-binding methyltransferase superfamily. C5-methyltransferase family. As to quaternary structure, homodimer. Interacts with DNMT3L. Interacts with SPOCD1; recruiting Dnmt3C to transposons. In terms of tissue distribution, specifically expressed in testis.

It is found in the nucleus. It catalyses the reaction a 2'-deoxycytidine in DNA + S-adenosyl-L-methionine = a 5-methyl-2'-deoxycytidine in DNA + S-adenosyl-L-homocysteine + H(+). Its function is as follows. DNA methyltransferase that specifically methylates the promoters of evolutionarily young retrotransposons in the male germline. De novo methylation and subsequent repression of transposable elements prevents their mobilization, which is essential for germline integrity. Compared to Dnmt3a and Dnmt3b, shows lower DNA methyltransferase efficiency. The chain is DNA (cytosine-5)-methyltransferase 3C from Mus musculus (Mouse).